Here is a 304-residue protein sequence, read N- to C-terminus: Dihydroorotate dehydrogenase B (NAD(+)), catalytic subunit (304 aa).

FMN is bound by residues S21 and 45-46; that span reads KA. Substrate-binding positions include K45 and 69–73; that span reads NAIGL. FMN contacts are provided by N99 and N127. N127 contributes to the substrate binding site. Catalysis depends on C130, which acts as the Nucleophile. FMN contacts are provided by K165 and I191. 192 to 193 is a binding site for substrate; sequence NT. Residues G217, 243–244, and 265–266 contribute to the FMN site; these read GG and GT.

Belongs to the dihydroorotate dehydrogenase family. Type 1 subfamily. As to quaternary structure, heterotetramer of 2 PyrK and 2 PyrD type B subunits. FMN is required as a cofactor.

The protein localises to the cytoplasm. It carries out the reaction (S)-dihydroorotate + NAD(+) = orotate + NADH + H(+). It participates in pyrimidine metabolism; UMP biosynthesis via de novo pathway; orotate from (S)-dihydroorotate (NAD(+) route): step 1/1. In terms of biological role, catalyzes the conversion of dihydroorotate to orotate with NAD(+) as electron acceptor. This chain is Dihydroorotate dehydrogenase B (NAD(+)), catalytic subunit (pyrD), found in Listeria welshimeri serovar 6b (strain ATCC 35897 / DSM 20650 / CCUG 15529 / CIP 8149 / NCTC 11857 / SLCC 5334 / V8).